The chain runs to 383 residues: tRNA-specific 2-thiouridylase MnmA (383 aa).

Residues 10–17 (AMSGGVDS) and M36 contribute to the ATP site. Catalysis depends on C107, which acts as the Nucleophile. The cysteines at positions 107 and 206 are disulfide-linked. Position 131 (G131) interacts with ATP. The interaction with tRNA stretch occupies residues 155–157 (KDQ). C206 acts as the Cysteine persulfide intermediate in catalysis. Residues 315-316 (RY) are interaction with tRNA.

Belongs to the MnmA/TRMU family.

Its subcellular location is the cytoplasm. The enzyme catalyses S-sulfanyl-L-cysteinyl-[protein] + uridine(34) in tRNA + AH2 + ATP = 2-thiouridine(34) in tRNA + L-cysteinyl-[protein] + A + AMP + diphosphate + H(+). Functionally, catalyzes the 2-thiolation of uridine at the wobble position (U34) of tRNA, leading to the formation of s(2)U34. In Salinibacter ruber (strain DSM 13855 / M31), this protein is tRNA-specific 2-thiouridylase MnmA.